The sequence spans 154 residues: Large ribosomal subunit protein uL22 (154 aa).

This sequence belongs to the universal ribosomal protein uL22 family. As to quaternary structure, part of the 50S ribosomal subunit.

Its function is as follows. This protein binds specifically to 23S rRNA. It makes multiple contacts with different domains of the 23S rRNA in the assembled 50S subunit and ribosome. The globular domain of the protein is located near the polypeptide exit tunnel on the outside of the subunit, while an extended beta-hairpin is found that lines the wall of the exit tunnel in the center of the 70S ribosome. This is Large ribosomal subunit protein uL22 from Natronomonas pharaonis (strain ATCC 35678 / DSM 2160 / CIP 103997 / JCM 8858 / NBRC 14720 / NCIMB 2260 / Gabara) (Halobacterium pharaonis).